The primary structure comprises 343 residues: Inositol 2-dehydrogenase (343 aa).

It belongs to the Gfo/Idh/MocA family. In terms of assembly, homotetramer.

It carries out the reaction myo-inositol + NAD(+) = scyllo-inosose + NADH + H(+). Involved in the oxidation of myo-inositol (MI) to 2-keto-myo-inositol (2KMI or 2-inosose). This is Inositol 2-dehydrogenase from Streptomyces avermitilis (strain ATCC 31267 / DSM 46492 / JCM 5070 / NBRC 14893 / NCIMB 12804 / NRRL 8165 / MA-4680).